A 98-amino-acid polypeptide reads, in one-letter code: uncharacterized protein (98 aa).

Low complexity predominate over residues 1 to 21 (MTTSPTTISTTTAATTTTTTP). Residues 1 to 26 (MTTSPTTISTTTAATTTTTTPGKGTD) form a disordered region. The chain crosses the membrane as a helical span at residues 29–49 (MVYIEAMLFSMLVLILLIIVC).

The protein resides in the host membrane. This is an uncharacterized protein from Equine herpesvirus 2 (strain 86/87) (EHV-2).